The primary structure comprises 363 residues: Mitochondrial phosphate carrier protein 2, mitochondrial (363 aa).

The helical transmembrane segment at 65–85 (AYFAACTVAGMLSCGITHTAI) threads the bilayer. 3 Solcar repeats span residues 65-149 (AYFA…AKKY), 162-246 (YKTL…TVEL), and 263-342 (VQLG…VKVL). At 86–123 (TPLDVIKCNMQIDPLKYKNITSAFKTTIKEQGLKGFTR) the chain is on the mitochondrial matrix side. The chain crosses the membrane as a helical span at residues 124-143 (GWSPTLLGYSAQGAFKYGLY). Over 144 to 164 (EYAKKYYSDIVGPEYAAKYKT) the chain is Mitochondrial intermembrane. Residues 165-185 (LIYLAGSASAEIVADVALCPM) form a helical membrane-spanning segment. Residues 186-220 (EAVKVRVQTQPGFARGLSDGLPKIIKSEGFRGLHK) lie on the Mitochondrial matrix side of the membrane. A helical transmembrane segment spans residues 221–240 (GLVPLWGRQIPYTMMKFATF). Residues 241-261 (ENTVELIYKKVMPTPKEECSK) lie on the Mitochondrial intermembrane side of the membrane. A helical transmembrane segment spans residues 262–282 (PVQLGVSFAGGYIAGIFCAII). Residues 283-321 (SHPADNLVSFLNNSKGATVADAVKRLGLWGMLTRGLPLR) are Mitochondrial matrix-facing. The chain crosses the membrane as a helical span at residues 322–342 (IFMIGTLTGAQWVIYDAVKVL). The Mitochondrial intermembrane segment spans residues 343–363 (AGLPTTGGASPATALAPSVSA).

Belongs to the mitochondrial carrier (TC 2.A.29) family. Expressed in leaves. Strong expression in senescent leaves.

Its subcellular location is the mitochondrion inner membrane. Its function is as follows. Transport of phosphate groups from the cytosol to the mitochondrial matrix. Mediates salt stress tolerance through an ATP-dependent pathway and via modulation of the gibberellin metabolism. The chain is Mitochondrial phosphate carrier protein 2, mitochondrial (MPT2) from Arabidopsis thaliana (Mouse-ear cress).